Here is a 433-residue protein sequence, read N- to C-terminus: Transcobalamin-1 (433 aa).

The N-terminal stretch at 1 to 23 (MRQSHQLPLVGLLLFSFIPSQLC) is a signal peptide. The interval 24 to 310 (EICEVSEENY…DINKDSSCVS (287 aa)) is globular N-terminal alpha domain. 3 disulfides stabilise this stretch: cysteine 26–cysteine 265, cysteine 105–cysteine 308, and cysteine 155–cysteine 197. 142–146 (TNYYQ) lines the cyanocob(III)alamin pocket. Asparagine 160 carries an N-linked (GlcNAc...) asparagine glycan. Aspartate 186 contacts cyanocob(III)alamin. N-linked (GlcNAc...) asparagine glycosylation is present at asparagine 216. Asparagine 240 and glutamine 289 together coordinate cyanocob(III)alamin. Residues 311 to 332 (ASGNFNISADEPITVTPPDSQS) form a flexible linker region. N-linked (GlcNAc...) asparagine glycans are attached at residues asparagine 316, asparagine 337, asparagine 343, asparagine 349, asparagine 354, and asparagine 369. The globular C-terminal beta domain stretch occupies residues 333 to 433 (YISVNYSVRI…ENLEVRWSKY (101 aa)). 385 to 386 (YI) provides a ligand contact to cyanocob(III)alamin. A disulfide bridge connects residues cysteine 388 and cysteine 393. Cyanocob(III)alamin is bound by residues 402-404 (WEL), leucine 411, and tyrosine 433.

The protein belongs to the eukaryotic cobalamin transport proteins family. In terms of processing, contains about 30% carbohydrates. Produced by the salivary glands of the oral cavity, in response to ingestion of food. Major constituent of secondary granules in neutrophils.

It localises to the secreted. Binds vitamin B12 with femtomolar affinity and protects it from the acidic environment of the stomach. The chain is Transcobalamin-1 (TCN1) from Homo sapiens (Human).